Here is a 107-residue protein sequence, read N- to C-terminus: Ferredoxin 1 (107 aa).

4Fe-4S ferredoxin-type domains follow at residues 2-30 (TFVV…YEGP) and 31-60 (NFLV…SEDE). 2 residues coordinate [3Fe-4S] cluster: C9 and C17. Residues C21, C40, C43, and C46 each contribute to the [4Fe-4S] cluster site. C50 provides a ligand contact to [3Fe-4S] cluster.

The cofactor is [4Fe-4S] cluster. [3Fe-4S] cluster serves as cofactor.

Its function is as follows. Ferredoxins are iron-sulfur proteins that transfer electrons in a wide variety of metabolic reactions. The sequence is that of Ferredoxin 1 from Stutzerimonas stutzeri (Pseudomonas stutzeri).